Reading from the N-terminus, the 3801-residue chain is Lysosomal-trafficking regulator (3801 aa).

Residues 148–173 are disordered; it reads KITHRYSVRDARKTQLSTSDSEANSD. A Phosphoserine modification is found at serine 164. The residue at position 165 (threonine 165) is a Phosphothreonine. A Phosphoserine modification is found at serine 166. The WD 1 repeat unit spans residues 662 to 700; it reads ELSSSLSSPSYRFQGILPSSGSEDLLWKWDALKAYQNFV. A compositionally biased stretch (basic and acidic residues) spans 1181-1190; that stretch reads AMTEKSHQSA. Disordered regions lie at residues 1181-1203 and 1221-1256; these read AMTE…FSEE and YEAD…SPND. Acidic residues predominate over residues 1221 to 1238; it reads YEADSESNPEDGETQDDG. Over residues 1246–1256 the composition is skewed to polar residues; the sequence is EGFSASSSPND. Residues serine 1509 and serine 1510 each carry the phosphoserine modification. The WD 2 repeat unit spans residues 1582–1626; sequence SQENIFLPSKWQHLVLTYLQQPQGKRRIHGKISIWVSGQRKPDVT. A phosphoserine mark is found at serine 2105, serine 2124, serine 2213, serine 2217, and serine 2264. Residues 2205–2215 are compositionally biased toward basic and acidic residues; that stretch reads KQLGAEPRSED. The tract at residues 2205 to 2224 is disordered; sequence KQLGAEPRSEDDSPGDESCP. In terms of domain architecture, BEACH-type PH spans 3009 to 3115; that stretch reads AASESIRVNR…VRDDVYHNIL (107 aa). The BEACH domain occupies 3120–3422; it reads PNLLEYGNIT…QLFHMAHVSR (303 aa). WD repeat units follow at residues 3563–3602, 3614–3653, 3656–3699, 3700–3744, and 3749–3788; these read SQQY…STPS, GHTE…YVQS, GHKS…VGHV, HCRE…PVRE, and KSNK…RLKQ.

In terms of assembly, interacts with CPAP, LIP8 and ZNF521. Abundantly expressed in adult and fetal thymus, peripheral blood leukocytes, bone marrow and several regions of the adult brain.

It is found in the cytoplasm. In terms of biological role, adapter protein that regulates and/or fission of intracellular vesicles such as lysosomes. Might regulate trafficking of effectors involved in exocytosis. In cytotoxic T-cells and natural killer (NK) cells, has role in the regulation of size, number and exocytosis of lytic granules. In macrophages and dendritic cells, regulates phagosome maturation by controlling the conversion of early phagosomal compartments into late phagosomes. In macrophages and dendritic cells, specifically involved in TLR3- and TLR4-induced production of pro-inflammatory cytokines by regulating the endosomal TLR3- TICAM1/TRIF and TLR4- TICAM1/TRIF signaling pathways. The polypeptide is Lysosomal-trafficking regulator (LYST) (Homo sapiens (Human)).